Here is a 208-residue protein sequence, read N- to C-terminus: Ribosomal RNA small subunit methyltransferase G (208 aa).

Residues Gly-78, Phe-83, 101–103 (ERS), 129–130 (IE), and Arg-142 each bind S-adenosyl-L-methionine.

This sequence belongs to the methyltransferase superfamily. RNA methyltransferase RsmG family.

It is found in the cytoplasm. Specifically methylates the N7 position of a guanine in 16S rRNA. The protein is Ribosomal RNA small subunit methyltransferase G of Borreliella burgdorferi (strain ATCC 35210 / DSM 4680 / CIP 102532 / B31) (Borrelia burgdorferi).